We begin with the raw amino-acid sequence, 1911 residues long: Adenylate kinase 9 (1911 aa).

Residues 31–285 (VCFVVFGKPG…LFMIVMDRLK (255 aa)) form an adenylate kinase 1 region. 40 to 45 (GVGKTT) lines the ATP pocket. Positions 60–89 (EALPILEEQIAAETESGVMLQSMLISGQSI) are NMP 1. Residues 87–89 (QSI) and 116–119 (EIPS) contribute to the AMP site. Residues 160–205 (GQRQHNNTGYIYSRDQWDPEVIENHRKKKKEAQKDGKGEEEEEEEE) are LID 1. A disordered region spans residues 185–210 (RKKKKEAQKDGKGEEEEEEEEQEEEE). Positions 197-210 (GEEEEEEEEQEEEE) are enriched in acidic residues. AMP is bound at residue Arg-229. Coiled-coil stretches lie at residues 443–485 (AEAT…EFGV) and 676–711 (LQKK…TEEE). 2 disordered regions span residues 728 to 796 (KAKE…TEIP) and 892 to 926 (DYEE…KERK). Residues 733–750 (EETDNEDEEEIEGDELEV) show a composition bias toward acidic residues. The segment covering 751 to 761 (HEEPEASHDTR) has biased composition (basic and acidic residues). 2 stretches are compositionally biased toward acidic residues: residues 767–791 (EEFE…ETTV) and 892–919 (DYEE…EEGE). Adenylate kinase stretches follow at residues 992–1203 (LRIC…ELIL) and 1412–1601 (IRII…KNVQ). 1001 to 1006 (GSGKTM) contributes to the ATP binding site. Positions 1021 to 1052 (QFEEVLQEKLLLKTEKKVGPEFEEDSENEQAA) are NMP 2. Residues 1050–1052 (QAA) and 1079–1082 (VQLT) contribute to the AMP site. The interval 1124–1144 (DGFPRYPEEAQFLGDRGFFPD) is LID 2. 1421 to 1426 (KSGKTT) contacts ATP. The segment at 1441–1472 (SIGGALRYVLNNHPETELALMLNWHLHKGMTA) is NMP 3. AMP is bound by residues Arg-1447, 1470-1472 (MTA), 1499-1502 (GYPV), Gln-1506, and Arg-1543. The interval 1536–1550 (LEKENEQRLPYPLHN) is LID 3.

It belongs to the adenylate kinase family.

The protein localises to the cytoplasm. Its subcellular location is the nucleus. It is found in the cell projection. The protein resides in the cilium. It localises to the flagellum. It carries out the reaction a ribonucleoside 5'-phosphate + ATP = a ribonucleoside 5'-diphosphate + ADP. The enzyme catalyses AMP + ATP = 2 ADP. It catalyses the reaction GTP + AMP = GDP + ADP. The catalysed reaction is CMP + ATP = CDP + ADP. It carries out the reaction GTP + CMP = CDP + GDP. The enzyme catalyses dAMP + ATP = dADP + ADP. It catalyses the reaction dCMP + ATP = dCDP + ADP. The catalysed reaction is a ribonucleoside 5'-diphosphate + ATP = a ribonucleoside 5'-triphosphate + ADP. It carries out the reaction CDP + ATP = CTP + ADP. The enzyme catalyses CDP + GTP = CTP + GDP. It catalyses the reaction GDP + ATP = GTP + ADP. The catalysed reaction is UDP + ATP = UTP + ADP. It carries out the reaction GTP + UDP = UTP + GDP. The enzyme catalyses dTDP + GTP = dTTP + GDP. It catalyses the reaction dCDP + ATP = dCTP + ADP. The catalysed reaction is dCDP + GTP = dCTP + GDP. It carries out the reaction dGDP + ATP = dGTP + ADP. The enzyme catalyses dTDP + ATP = dTTP + ADP. It catalyses the reaction dADP + GTP = dATP + GDP. In terms of biological role, broad-specificity nucleoside phosphate kinase involved in cellular nucleotide homeostasis by catalyzing nucleoside-phosphate interconversions. Similar to other adenylate kinases, preferentially catalyzes the phosphorylation of the nucleoside monophosphate AMP with ATP as phosphate donor to produce ADP. In vitro, can also catalyze the phosphorylation of CMP, dAMP and dCMP and use GTP as an alternate phosphate donor. Moreover, exhibits a diphosphate kinase activity, producing ATP, CTP, GTP, UTP, TTP, dATP, dCTP and dGTP from the corresponding diphosphate substrates with either ATP or GTP as phosphate donors. For this activity shows the following substrate preference CDP &gt; UDP &gt; ADP &gt; TDP. The chain is Adenylate kinase 9 from Homo sapiens (Human).